We begin with the raw amino-acid sequence, 61 residues long: Sperm protamine P1 (61 aa).

The interval 1–61 (MARYRRRSRS…RRYSRRGRRR (61 aa)) is disordered.

Belongs to the protamine P1 family. Testis.

The protein localises to the nucleus. The protein resides in the chromosome. Its function is as follows. Protamines substitute for histones in the chromatin of sperm during the haploid phase of spermatogenesis. They compact sperm DNA into a highly condensed, stable and inactive complex. This is Sperm protamine P1 (PRM1) from Dasyurus hallucatus (Northern quoll).